The primary structure comprises 211 residues: Histone H1t (211 aa).

Position 1 is an N-acetylalanine (Ala1). Low complexity predominate over residues 1-16 (AETAPAAPADSVPASV). The disordered stretch occupies residues 1–42 (AETAPAAPADSVPASVEKPPAKKRGKKPVGLTGTSRKAPSAS). Over residues 32–42 (TGTSRKAPSAS) the composition is skewed to polar residues. One can recognise an H15 domain in the interval 39–112 (PSASVSKLIT…GASGSFKLSK (74 aa)). Arg57 carries the citrulline modification. Positions 101 to 211 (GTGASGSFKL…TNPRKATNRK (111 aa)) are disordered. Residues 121 to 135 (GKVKKPAAAKTKKLV) are compositionally biased toward basic residues. Ser142 is modified (phosphoserine). Basic residues predominate over residues 147–156 (KANKRAKKSR). Phosphothreonine is present on Thr158. Ser166 and Ser181 each carry phosphoserine. Basic residues predominate over residues 176–189 (KQQRKSPAKARAAK).

Belongs to the histone H1/H5 family. Post-translationally, phosphorylated in early spermatids. In terms of processing, citrullination at Arg-57 (H1R54ci) by PADI4 takes place within the DNA-binding site of H1 and results in its displacement from chromatin and global chromatin decondensation, thereby promoting pluripotency and stem cell maintenance. In terms of tissue distribution, testis-specific.

Its subcellular location is the nucleus. It localises to the chromosome. Testis-specific histone H1 that forms less compacted chromatin compared to other H1 histone subtypes. Formation of more relaxed chromatin may be required to promote chromatin architecture required for proper chromosome regulation during meiosis, such as homologous recombination. Histones H1 act as linkers that bind to nucleosomes and compact polynucleosomes into a higher-order chromatin configuration. The chain is Histone H1t from Sus scrofa (Pig).